Consider the following 86-residue polypeptide: Translation initiation factor IF-1 2 (86 aa).

An S1-like domain is found at 1-72 (MAKEELLEME…SKGRITFRHI (72 aa)).

This sequence belongs to the IF-1 family. Component of the 30S ribosomal translation pre-initiation complex which assembles on the 30S ribosome in the order IF-2 and IF-3, IF-1 and N-formylmethionyl-tRNA(fMet); mRNA recruitment can occur at any time during PIC assembly.

The protein resides in the cytoplasm. Its function is as follows. One of the essential components for the initiation of protein synthesis. Stabilizes the binding of IF-2 and IF-3 on the 30S subunit to which N-formylmethionyl-tRNA(fMet) subsequently binds. Helps modulate mRNA selection, yielding the 30S pre-initiation complex (PIC). Upon addition of the 50S ribosomal subunit IF-1, IF-2 and IF-3 are released leaving the mature 70S translation initiation complex. The chain is Translation initiation factor IF-1 2 from Polynucleobacter asymbioticus (strain DSM 18221 / CIP 109841 / QLW-P1DMWA-1) (Polynucleobacter necessarius subsp. asymbioticus).